The following is a 194-amino-acid chain: MRTATKTRVTAETSIELSINLDSQTESTISTGVGFLDHMLTLFAKHSRVTLNVKADGDTYVDAHHTVEDIGITLGLCLKEALADKASINRYGSSYVPMDESLGFCALDLSGRSYLVFDAELTNPKLGDFDTELVEEFFQAVAFNTEMNLHLRVLYGKNTHHKIEALFKAFGRALREAITINPEIKGVNSTKGVL.

Belongs to the imidazoleglycerol-phosphate dehydratase family.

It is found in the cytoplasm. It carries out the reaction D-erythro-1-(imidazol-4-yl)glycerol 3-phosphate = 3-(imidazol-4-yl)-2-oxopropyl phosphate + H2O. The protein operates within amino-acid biosynthesis; L-histidine biosynthesis; L-histidine from 5-phospho-alpha-D-ribose 1-diphosphate: step 6/9. This is Imidazoleglycerol-phosphate dehydratase from Listeria monocytogenes serotype 4a (strain HCC23).